Reading from the N-terminus, the 383-residue chain is uncharacterized protein (383 aa).

The protein belongs to the peptidase M20 family.

This is an uncharacterized protein from Staphylococcus aureus (strain N315).